The sequence spans 332 residues: Biotin synthase (332 aa).

In terms of domain architecture, Radical SAM core spans 53–282; that stretch reads HFGKKVKLNM…TKEIRISGGR (230 aa). Residues Cys-71, Cys-75, and Cys-78 each coordinate [4Fe-4S] cluster. [2Fe-2S] cluster contacts are provided by Cys-115, Cys-147, Cys-207, and Arg-277.

This sequence belongs to the radical SAM superfamily. Biotin synthase family. As to quaternary structure, homodimer. The cofactor is [4Fe-4S] cluster. [2Fe-2S] cluster is required as a cofactor.

The catalysed reaction is (4R,5S)-dethiobiotin + (sulfur carrier)-SH + 2 reduced [2Fe-2S]-[ferredoxin] + 2 S-adenosyl-L-methionine = (sulfur carrier)-H + biotin + 2 5'-deoxyadenosine + 2 L-methionine + 2 oxidized [2Fe-2S]-[ferredoxin]. The protein operates within cofactor biosynthesis; biotin biosynthesis; biotin from 7,8-diaminononanoate: step 2/2. Catalyzes the conversion of dethiobiotin (DTB) to biotin by the insertion of a sulfur atom into dethiobiotin via a radical-based mechanism. The chain is Biotin synthase from Bacillus cereus (strain AH187).